The primary structure comprises 326 residues: Putative ribose-phosphate pyrophosphokinase 2 (326 aa).

ATP-binding positions include 43 to 45 and 102 to 103; these read DGE and RQ. Residue His136 participates in Mg(2+) binding. D-ribose 5-phosphate-binding positions include Asp225 and 229 to 233; that span reads NTGKT.

The protein belongs to the ribose-phosphate pyrophosphokinase family. Class I subfamily. As to quaternary structure, homohexamer. Mg(2+) serves as cofactor.

It is found in the cytoplasm. It carries out the reaction D-ribose 5-phosphate + ATP = 5-phospho-alpha-D-ribose 1-diphosphate + AMP + H(+). It participates in metabolic intermediate biosynthesis; 5-phospho-alpha-D-ribose 1-diphosphate biosynthesis; 5-phospho-alpha-D-ribose 1-diphosphate from D-ribose 5-phosphate (route I): step 1/1. Its function is as follows. Involved in the biosynthesis of the central metabolite phospho-alpha-D-ribosyl-1-pyrophosphate (PRPP) via the transfer of pyrophosphoryl group from ATP to 1-hydroxyl of ribose-5-phosphate (Rib-5-P). The polypeptide is Putative ribose-phosphate pyrophosphokinase 2 (Streptococcus pyogenes serotype M18 (strain MGAS8232)).